The sequence spans 128 residues: Holo-[acyl-carrier-protein] synthase (128 aa).

2 residues coordinate Mg(2+): Asp-7 and Glu-55.

The protein belongs to the P-Pant transferase superfamily. AcpS family. The cofactor is Mg(2+).

The protein resides in the cytoplasm. The catalysed reaction is apo-[ACP] + CoA = holo-[ACP] + adenosine 3',5'-bisphosphate + H(+). Transfers the 4'-phosphopantetheine moiety from coenzyme A to a Ser of acyl-carrier-protein. The chain is Holo-[acyl-carrier-protein] synthase from Moorella thermoacetica (strain ATCC 39073 / JCM 9320).